We begin with the raw amino-acid sequence, 226 residues long: ATP-dependent dethiobiotin synthetase BioD (226 aa).

14–19 lines the ATP pocket; sequence GIGKTF. Thr18 provides a ligand contact to Mg(2+). The active site involves Lys39. Ser43 serves as a coordination point for substrate. ATP is bound by residues Asp56, 117-120, 177-178, 206-208, and Asn213; these read EGVG, NT, and PHI. Residues Asp56 and Glu117 each coordinate Mg(2+).

The protein belongs to the dethiobiotin synthetase family. As to quaternary structure, homodimer. It depends on Mg(2+) as a cofactor.

The protein resides in the cytoplasm. It carries out the reaction (7R,8S)-7,8-diammoniononanoate + CO2 + ATP = (4R,5S)-dethiobiotin + ADP + phosphate + 3 H(+). The protein operates within cofactor biosynthesis; biotin biosynthesis; biotin from 7,8-diaminononanoate: step 1/2. Catalyzes a mechanistically unusual reaction, the ATP-dependent insertion of CO2 between the N7 and N8 nitrogen atoms of 7,8-diaminopelargonic acid (DAPA, also called 7,8-diammoniononanoate) to form a ureido ring. The sequence is that of ATP-dependent dethiobiotin synthetase BioD from Xylella fastidiosa (strain Temecula1 / ATCC 700964).